Consider the following 128-residue polypeptide: Large ribosomal subunit protein uL22 (128 aa).

Belongs to the universal ribosomal protein uL22 family. In terms of assembly, part of the 50S ribosomal subunit.

Functionally, this protein binds specifically to 23S rRNA; its binding is stimulated by other ribosomal proteins, e.g. L4, L17, and L20. It is important during the early stages of 50S assembly. It makes multiple contacts with different domains of the 23S rRNA in the assembled 50S subunit and ribosome. Its function is as follows. The globular domain of the protein is located near the polypeptide exit tunnel on the outside of the subunit, while an extended beta-hairpin is found that lines the wall of the exit tunnel in the center of the 70S ribosome. The protein is Large ribosomal subunit protein uL22 of Methylobacterium radiotolerans (strain ATCC 27329 / DSM 1819 / JCM 2831 / NBRC 15690 / NCIMB 10815 / 0-1).